The following is a 576-amino-acid chain: Alpha-bisabolol synthase (576 aa).

(2E,6E)-farnesyl diphosphate contacts are provided by arginine 286, aspartate 323, aspartate 327, arginine 466, and asparagine 469. Residues aspartate 323 and aspartate 327 each coordinate Mg(2+). The short motif at 323-327 (DDVYD) is the DDXXD motif element. Residues asparagine 469, threonine 473, and glutamate 477 each coordinate Mg(2+).

Belongs to the terpene synthase family. Tpsb subfamily. Requires Mg(2+) as cofactor. It depends on Mn(2+) as a cofactor.

Its function is as follows. Produces a mixture of beta-bisabolene and alpha-bisabolol, along with traces of alpha-bisabolene and farnesene isomers from (2E,6E)-farnesyl diphosphate in fragrance biosynthesis. The chain is Alpha-bisabolol synthase from Santalum spicatum (Australian sandalwood).